Reading from the N-terminus, the 212-residue chain is ER lumen protein-retaining receptor 1 (212 aa).

The Lumenal segment spans residues 1-4 (MNIF). The helical transmembrane segment at 5–24 (RFLGDISHLSAILILLLKIW) threads the bilayer. At 25-32 (KSRSCAGI) the chain is on the cytoplasmic side. A helical membrane pass occupies residues 33 to 52 (SGKSQLLFAIVFTTRYLDLF). Residues 47 to 48 (RY) are interaction with the K-D-E-L motif on target proteins. The Lumenal segment spans residues 53–58 (TNFISL). The chain crosses the membrane as a helical span at residues 59 to 79 (YNTSMKMVYVASSYATIWMIY). At 80–92 (SKFKATYDGNHDT) the chain is on the cytoplasmic side. The chain crosses the membrane as a helical span at residues 93-110 (FRVEFLIVPTAILAFLVN). The Lumenal segment spans residues 111–116 (HDFTPL). Residues 117–135 (EILWTFSIYLESVAILPQL) traverse the membrane as a helical segment. At 136 to 149 (FMVSKTGEAETITS) the chain is on the cytoplasmic side. The helical transmembrane segment at 150–168 (HYLFALGIYRALYLFNWIW) threads the bilayer. The tract at residues 159 to 169 (RALYLFNWIWR) is interaction with the K-D-E-L motif on target proteins. Residues 169 to 178 (RYQFEGFFDL) lie on the Lumenal side of the membrane. Residues 179–199 (IAIVAGLVQTVLYCDFFYLYI) form a helical membrane-spanning segment. Residues 200–212 (TKVLKGKKLSLPA) lie on the Cytoplasmic side of the membrane. Residues 204–207 (KGKK) are important for recycling of cargo proteins with the sequence motif K-D-E-L from the Golgi to the endoplasmic reticulum.

The protein belongs to the ERD2 family.

Its subcellular location is the golgi apparatus membrane. It is found in the cytoplasmic vesicle. It localises to the COPI-coated vesicle membrane. The protein localises to the endoplasmic reticulum membrane. The protein resides in the endoplasmic reticulum-Golgi intermediate compartment membrane. In terms of biological role, receptor for the C-terminal sequence motif K-D-E-L that is present on endoplasmic reticulum resident proteins and that mediates their recycling from the Golgi back to the endoplasmic reticulum. This chain is ER lumen protein-retaining receptor 1 (kdelr1), found in Xenopus tropicalis (Western clawed frog).